Reading from the N-terminus, the 458-residue chain is Paired box protein Pax-8 (458 aa).

Residues 18 to 144 constitute a DNA-binding region (paired); that stretch reads GHGGLNQLGG…SSINRIIRTK (127 aa). Positions 21–77 are PAI subdomain; that stretch reads GLNQLGGAFVNGRPLPEVVRQRIVDLAHQGVRPCDISRQLRVSHGCVSKILGRYYET. Residues 96–144 are RED subdomain; sequence KVVEKIGDYKRQNPTMFAWEIRDRLLAEGVCDNDTVPSVSSINRIIRTK. A disordered region spans residues 198–217; that stretch reads PGADGKRKLDDSDQESCRLS.

The protein localises to the nucleus. Functionally, probable transcription factor. Involved in kidney development, acting synergistically with lhx1/lim-1 to establish the pronephric primordium in late gastrulae/early neurulae. The polypeptide is Paired box protein Pax-8 (Xenopus tropicalis (Western clawed frog)).